A 151-amino-acid chain; its full sequence is Large ribosomal subunit protein bL28c (151 aa).

A chloroplast-targeting transit peptide spans 1–74 (MATMVAGISL…PFKPSLQPVA (74 aa)).

It belongs to the bacterial ribosomal protein bL28 family. In terms of assembly, part of the 50S ribosomal subunit.

It localises to the plastid. Its subcellular location is the chloroplast. The chain is Large ribosomal subunit protein bL28c (RPL28) from Nicotiana tabacum (Common tobacco).